The following is a 302-amino-acid chain: MAAARVLLLLSGRPESVSFAQSVCGLLGAGSGLGPWPTHCGLKRGQLVLSDKPFPGASARLPLQRPPFCPFAALDQQPRAPGVELPPKGRGVDLGVAVILQSSDQTVLLTRRTSTLNISPNLWVPPGGHVEPDEELLDGGLRELWEESGLQLPQGQFSWVPLGLWESAYPPKLSWGLPKYHHIVLYLLVISQESQQQLQARIQPNAGEVSAFMWLGPDIAAAVAATEDGTETPKHLPQDLPSSVPTVELKENGGAQPLALPTSTLLRTTPGTADSRERVSTGTKFALTLWLQHLGRKSRDGS.

Positions Gly89–Pro237 constitute a Nudix hydrolase domain. A Nudix box motif is present at residues Gly128–Gly149. The Mg(2+) site is built by Glu143 and Glu147.

It belongs to the Nudix hydrolase family. The cofactor is Mg(2+). It depends on Mn(2+) as a cofactor.

It catalyses the reaction a 5'-end (N(7)-methyl 5'-triphosphoguanosine)-ribonucleoside in mRNA + H2O = N(7)-methyl-GDP + a 5'-end phospho-ribonucleoside in mRNA + 2 H(+). Functionally, acts as a decapping enzyme capable of hydrolyzing monomethylated capped RNAs (in vitro). Hydrolyzes monomethylated capped RNA after alpha and beta phosphates to form N(7)-methyl-GDP. Shows low activity towards unmethylated capped RNA. The chain is m7GpppN-mRNA hydrolase NUDT17 (NUDT17) from Bos taurus (Bovine).